The sequence spans 409 residues: Elongation factor Tu (409 aa).

Residues 10–214 enclose the tr-type G domain; it reads KPHANIGTIG…EVDAYIPTPE (205 aa). The segment at 19–26 is G1; sequence GHVDHGKT. Residue 19–26 participates in GTP binding; that stretch reads GHVDHGKT. A Mg(2+)-binding site is contributed by Thr-26. Residues 60–64 form a G2 region; that stretch reads GITIN. Residues 81-84 are G3; the sequence is DCPG. GTP is bound by residues 81-85 and 136-139; these read DCPGH and NKED. The G4 stretch occupies residues 136-139; sequence NKED. Residues 174 to 176 form a G5 region; that stretch reads SAL.

This sequence belongs to the TRAFAC class translation factor GTPase superfamily. Classic translation factor GTPase family. EF-Tu/EF-1A subfamily. In terms of assembly, monomer.

It is found in the cytoplasm. The enzyme catalyses GTP + H2O = GDP + phosphate + H(+). Its function is as follows. GTP hydrolase that promotes the GTP-dependent binding of aminoacyl-tRNA to the A-site of ribosomes during protein biosynthesis. This chain is Elongation factor Tu, found in Synechococcus elongatus (strain ATCC 33912 / PCC 7942 / FACHB-805) (Anacystis nidulans R2).